We begin with the raw amino-acid sequence, 310 residues long: tRNA pseudouridine synthase B (310 aa).

The active-site Nucleophile is the aspartate 47.

Belongs to the pseudouridine synthase TruB family. Type 1 subfamily.

It carries out the reaction uridine(55) in tRNA = pseudouridine(55) in tRNA. Responsible for synthesis of pseudouridine from uracil-55 in the psi GC loop of transfer RNAs. In Caulobacter vibrioides (strain ATCC 19089 / CIP 103742 / CB 15) (Caulobacter crescentus), this protein is tRNA pseudouridine synthase B.